The sequence spans 252 residues: Chitooligosaccharide deacetylase (252 aa).

Mg(2+)-binding residues include histidine 61 and histidine 125.

Belongs to the YdjC deacetylase family. ChbG subfamily. As to quaternary structure, homodimer. Mg(2+) is required as a cofactor.

It is found in the cytoplasm. It carries out the reaction N,N'-diacetylchitobiose + H2O = N-acetyl-beta-D-glucosaminyl-(1-&gt;4)-D-glucosamine + acetate. The enzyme catalyses diacetylchitobiose-6'-phosphate + H2O = N'-monoacetylchitobiose-6'-phosphate + acetate. It participates in glycan degradation; chitin degradation. In terms of biological role, involved in the degradation of chitin. ChbG is essential for growth on the acetylated chitooligosaccharides chitobiose and chitotriose but is dispensable for growth on cellobiose and chitosan dimer, the deacetylated form of chitobiose. Deacetylation of chitobiose-6-P and chitotriose-6-P is necessary for both the activation of the chb promoter by the regulatory protein ChbR and the hydrolysis of phosphorylated beta-glucosides by the phospho-beta-glucosidase ChbF. Catalyzes the removal of only one acetyl group from chitobiose-6-P to yield monoacetylchitobiose-6-P, the inducer of ChbR and the substrate of ChbF. This Escherichia coli O127:H6 (strain E2348/69 / EPEC) protein is Chitooligosaccharide deacetylase.